A 511-amino-acid polypeptide reads, in one-letter code: DEP domain-containing protein 7 (511 aa).

In terms of domain architecture, DEP spans 46-136 (LQTQVEVKKR…SSCSLYRFTT (91 aa)).

Belongs to the DEPDC7 family. As to expression, expressed in liver.

In Homo sapiens (Human), this protein is DEP domain-containing protein 7 (DEPDC7).